Reading from the N-terminus, the 430-residue chain is Adenosylhomocysteinase (430 aa).

Positions 56, 131, and 156 each coordinate substrate. Position 157-159 (157-159 (TTT)) interacts with NAD(+). Positions 186 and 190 each coordinate substrate. NAD(+)-binding positions include Asn191, 220–225 (GFGDVG), Glu243, Asn278, 299–301 (IGH), and Asn344.

It belongs to the adenosylhomocysteinase family. Requires NAD(+) as cofactor.

The protein localises to the cytoplasm. It catalyses the reaction S-adenosyl-L-homocysteine + H2O = L-homocysteine + adenosine. It participates in amino-acid biosynthesis; L-homocysteine biosynthesis; L-homocysteine from S-adenosyl-L-homocysteine: step 1/1. May play a key role in the regulation of the intracellular concentration of adenosylhomocysteine. This chain is Adenosylhomocysteinase, found in Halorhodospira halophila (strain DSM 244 / SL1) (Ectothiorhodospira halophila (strain DSM 244 / SL1)).